Here is a 439-residue protein sequence, read N- to C-terminus: 23S rRNA (uracil(1939)-C(5))-methyltransferase RlmD (439 aa).

The TRAM domain occupies lysine 10–lysine 69. Residues cysteine 82, cysteine 88, cysteine 91, and cysteine 169 each coordinate [4Fe-4S] cluster. S-adenosyl-L-methionine contacts are provided by glutamine 272, phenylalanine 301, asparagine 306, glutamate 322, asparagine 349, and aspartate 370. Cysteine 396 (nucleophile) is an active-site residue.

This sequence belongs to the class I-like SAM-binding methyltransferase superfamily. RNA M5U methyltransferase family. RlmD subfamily.

The enzyme catalyses uridine(1939) in 23S rRNA + S-adenosyl-L-methionine = 5-methyluridine(1939) in 23S rRNA + S-adenosyl-L-homocysteine + H(+). Catalyzes the formation of 5-methyl-uridine at position 1939 (m5U1939) in 23S rRNA. The polypeptide is 23S rRNA (uracil(1939)-C(5))-methyltransferase RlmD (Vibrio campbellii (strain ATCC BAA-1116)).